The sequence spans 233 residues: Proteasome subunit alpha (233 aa).

It belongs to the peptidase T1A family. The 20S proteasome core is composed of 14 alpha and 14 beta subunits that assemble into four stacked heptameric rings, resulting in a barrel-shaped structure. The two inner rings, each composed of seven catalytic beta subunits, are sandwiched by two outer rings, each composed of seven alpha subunits. The catalytic chamber with the active sites is on the inside of the barrel. Has a gated structure, the ends of the cylinder being occluded by the N-termini of the alpha-subunits. Is capped at one or both ends by the proteasome regulatory ATPase, PAN. Post-translationally, the N-terminus is blocked.

It is found in the cytoplasm. With respect to regulation, the formation of the proteasomal ATPase PAN-20S proteasome complex, via the docking of the C-termini of PAN into the intersubunit pockets in the alpha-rings, triggers opening of the gate for substrate entry. Interconversion between the open-gate and close-gate conformations leads to a dynamic regulation of the 20S proteasome proteolysis activity. Component of the proteasome core, a large protease complex with broad specificity involved in protein degradation. The T.acidophilum proteasome is able to cleave oligopeptides after Tyr, Leu, Phe, and to a lesser extent after Glu and Arg. Thus, displays chymotrypsin-like activity and low level of caspase-like and trypsin-like activities. The polypeptide is Proteasome subunit alpha (Thermoplasma acidophilum (strain ATCC 25905 / DSM 1728 / JCM 9062 / NBRC 15155 / AMRC-C165)).